The chain runs to 1856 residues: Zinc metalloprotease ZmpC (1856 aa).

Positions 1–42 are cleaved as a signal peptide; sequence MSRKSIGEKRHSFSMRKLSVGLVSVTVSSFFLMSQGIQSVSA. Positions 43–95 are excised as a propeptide; that stretch reads DNMESPIHYKYMTEGKLTDEEKSLLVEALPQLAEESDDTYYLVYRSQQFLPNT. Residues 92-96 carry the LPXTG sorting signal motif; the sequence is LPNTG. Thr-95 carries the pentaglycyl murein peptidoglycan amidated threonine modification. 2 helical membrane passes run 97-117 and 130-152; these read FNPTVGTFLFTAGLSLLVLLV and FLLLTSMGVQLLPASAFGLTSQI. The Extracellular segment spans residues 153 to 1856; that stretch reads LSAYNSQLSI…TDDFRNSIYK (1704 aa). 2 stretches are compositionally biased toward polar residues: residues 254-267 and 286-295; these read NLSSNDSFASQVEQ and NPVSATTVQS. The disordered stretch occupies residues 254-362; the sequence is NLSSNDSFAS…GEAAVREEEP (109 aa). Composition is skewed to basic and acidic residues over residues 322 to 334 and 351 to 361; these read PGHEGEAAVREDL and HEGEAAVREEE. The 80-residue stretch at 417–496 folds into the G5 domain; that stretch reads ALEVTTRNRT…NEVVKVGTLV (80 aa). Residue His-1502 coordinates Zn(2+). Glu-1503 is an active-site residue. 2 residues coordinate Zn(2+): His-1506 and Glu-1526.

This sequence belongs to the peptidase M26 family. It depends on Zn(2+) as a cofactor. The Gram-positive cell-wall anchor motif LPXTG is located in the N-terminal part, in contrast to such motifs in other known streptococcal and staphylococcal proteins. The protease could be cleaved by the sortase and anchored in the membrane via the two potential N-terminal transmembrane domains, whereas the propeptide located prior to the LPXTG motif would remain attached to the cell wall peptidoglycan by an amide bond.

Its subcellular location is the secreted. It is found in the cell wall. It localises to the membrane. Its function is as follows. Zinc metalloproteinase that specifically cleaves human matrix metalloproteinase 9 (MMP-9), leading to its activation. May play a role in pneumococcal virulence and pathogenicity in the lung. This Streptococcus pneumoniae serotype 4 (strain ATCC BAA-334 / TIGR4) protein is Zinc metalloprotease ZmpC (zmpC).